The following is a 268-amino-acid chain: Exopolysaccharide production negative regulator (268 aa).

A signal peptide spans 1–22; the sequence is MRAGELKSLRVAVLGMSLAVGA.

In terms of biological role, negatively modulates exopolysaccharide (EPS) biosynthesis. The protein is Exopolysaccharide production negative regulator (exoR) of Rhizobium meliloti (strain 1021) (Ensifer meliloti).